Here is a 360-residue protein sequence, read N- to C-terminus: Outer mitochondrial transmembrane helix translocase (360 aa).

Over 1-15 (MVHGEAFSRPLSRNE) the chain is Mitochondrial intermembrane. Residues 16–34 (VVGLIFRLTIFGAVTYFTI) form a helical membrane-spanning segment. The Cytoplasmic segment spans residues 35-360 (KWMVDAIDPT…QNVLMHVSLD (326 aa)). 133 to 140 (GPPGCGKT) lines the ATP pocket.

The protein belongs to the AAA ATPase family. MSP1 subfamily.

Its subcellular location is the mitochondrion outer membrane. The protein resides in the peroxisome membrane. It is found in the postsynaptic cell membrane. The catalysed reaction is [protein]-with a C-terminal TM segment(out) + ATP + H2O = [protein]-with a C-terminal TM segment(in) + ADP + phosphate + H(+). Outer mitochondrial translocase required to remove mislocalized tail-anchored transmembrane proteins on mitochondria. Specifically recognizes and binds tail-anchored transmembrane proteins: acts as a dislocase that mediates the ATP-dependent extraction of mistargeted tail-anchored transmembrane proteins from the mitochondrion outer membrane. Also plays a critical role in regulating the surface expression of AMPA receptors (AMPAR), thereby regulating synaptic plasticity and learning and memory. The sequence is that of Outer mitochondrial transmembrane helix translocase from Xenopus tropicalis (Western clawed frog).